The following is a 119-amino-acid chain: Ubiquinone biosynthesis accessory factor UbiK (119 aa).

A coiled-coil region spans residues 79-99; that stretch reads LLRTREKLALLEQRLSELEAR. Residues 96 to 106 show a composition bias toward basic and acidic residues; it reads LEARDKPEEVK. Residues 96-119 are disordered; it reads LEARDKPEEVKPAPAIPPVDPQQE. Residues 109-119 are compositionally biased toward pro residues; it reads PAIPPVDPQQE.

Belongs to the UbiK family. In terms of assembly, homotrimer.

The protein resides in the cytoplasm. It functions in the pathway cofactor biosynthesis; ubiquinone biosynthesis. Its function is as follows. Required for efficient ubiquinone (coenzyme Q) biosynthesis under aerobic conditions. UbiK is probably an accessory factor of Ubi enzymes and facilitates ubiquinone biosynthesis by acting as an assembly factor, a targeting factor, or both. Dispensable for ubiquinone biosynthesis under anaerobiosis. Required for proliferation in macrophages and virulence in mice. Significantly contributes to colonization and invasion as well as host inflammation and innate immunity after infection. In vitro, has membrane fusogenic activity at acidic pH. The chain is Ubiquinone biosynthesis accessory factor UbiK from Salmonella typhimurium (strain LT2 / SGSC1412 / ATCC 700720).